The following is a 192-amino-acid chain: UPF0149 protein YE3397 (192 aa).

The protein belongs to the UPF0149 family.

The chain is UPF0149 protein YE3397 from Yersinia enterocolitica serotype O:8 / biotype 1B (strain NCTC 13174 / 8081).